The following is a 249-amino-acid chain: 5'-nucleotidase SurE (249 aa).

4 residues coordinate a divalent metal cation: Asp8, Asp9, Ser39, and Asn91.

Belongs to the SurE nucleotidase family. The cofactor is a divalent metal cation.

The protein resides in the cytoplasm. The catalysed reaction is a ribonucleoside 5'-phosphate + H2O = a ribonucleoside + phosphate. Its function is as follows. Nucleotidase that shows phosphatase activity on nucleoside 5'-monophosphates. This is 5'-nucleotidase SurE from Vesicomyosocius okutanii subsp. Calyptogena okutanii (strain HA).